Here is a 242-residue protein sequence, read N- to C-terminus: Tyrosine recombinase XerD-like (242 aa).

A Core-binding (CB) domain is found at 1 to 71 (MKEAIDQFIQ…AVNQFLYFLY (71 aa)). The region spanning 90–242 (ENSSQGSLLD…KSITTLEKYR (153 aa)) is the Tyr recombinase domain. Active-site residues include Lys148 and Arg209. Tyr241 serves as the catalytic O-(3'-phospho-DNA)-tyrosine intermediate.

This sequence belongs to the 'phage' integrase family. XerD-like subfamily.

The protein localises to the cytoplasm. Putative tyrosine recombinase. Not involved in the cutting and rejoining of the recombining DNA molecules on dif(SL) site. The polypeptide is Tyrosine recombinase XerD-like (Streptococcus gordonii (strain Challis / ATCC 35105 / BCRC 15272 / CH1 / DL1 / V288)).